Reading from the N-terminus, the 277-residue chain is Large ribosomal subunit protein uL2 (277 aa).

A disordered region spans residues 222 to 277 (GVTMNPVDHPHGGGEGRTSGGRNPVTPWGFPTKGKKTRNNKATDKFIVSSRHKRKK).

It belongs to the universal ribosomal protein uL2 family. Part of the 50S ribosomal subunit. Forms a bridge to the 30S subunit in the 70S ribosome.

In terms of biological role, one of the primary rRNA binding proteins. Required for association of the 30S and 50S subunits to form the 70S ribosome, for tRNA binding and peptide bond formation. It has been suggested to have peptidyltransferase activity; this is somewhat controversial. Makes several contacts with the 16S rRNA in the 70S ribosome. This chain is Large ribosomal subunit protein uL2, found in Xanthobacter autotrophicus (strain ATCC BAA-1158 / Py2).